Consider the following 152-residue polypeptide: Heavy metal-associated isoprenylated plant protein 22 (152 aa).

Residues 28-91 (MQTVNIKVKI…TVQSTGKKKA (64 aa)) form the HMA domain. The a metal cation site is built by Cys-39 and Cys-42. Residues 123–152 (SEQAQAQPGSTDDKLMSLFSDENPNACTVM) form a disordered region. Residues 142-152 (SDENPNACTVM) are compositionally biased toward polar residues. At Cys-149 the chain carries Cysteine methyl ester. A lipid anchor (S-farnesyl cysteine) is attached at Cys-149. A propeptide spans 150–152 (TVM) (removed in mature form).

Belongs to the HIPP family. In terms of assembly, interacts with ZHD11/HB29. Expressed in lateral roots and mature anthers.

The protein resides in the membrane. Heavy-metal-binding protein. Binds cadmium. May be involved in cadmium transport and play a role in cadmium detoxification. This is Heavy metal-associated isoprenylated plant protein 22 from Arabidopsis thaliana (Mouse-ear cress).